The primary structure comprises 201 residues: MAEKFTQHTGLVVPLDAANVDTDAIIPKQFLQKVTRTGFGAHLFNDWRFLDEKGQQPNPEFVLNFPEYQGASILLARENFGCGSSREHAPWALTDYGFKVVIAPSFADIFYGNSFNNQLLPVKLSDEQVDELFTLVKANPGIKFEVDLEAQVVKAGDKTYSFKIDDFRRHCMLNGLDSIGLTLQHEDAIAEYENKQPAFMR.

This sequence belongs to the LeuD family. LeuD type 1 subfamily. As to quaternary structure, heterodimer of LeuC and LeuD.

The catalysed reaction is (2R,3S)-3-isopropylmalate = (2S)-2-isopropylmalate. It functions in the pathway amino-acid biosynthesis; L-leucine biosynthesis; L-leucine from 3-methyl-2-oxobutanoate: step 2/4. Catalyzes the isomerization between 2-isopropylmalate and 3-isopropylmalate, via the formation of 2-isopropylmaleate. In Salmonella paratyphi A (strain ATCC 9150 / SARB42), this protein is 3-isopropylmalate dehydratase small subunit.